We begin with the raw amino-acid sequence, 54 residues long: MARSTARPVVKLKSTAGTGVTYVTRKNRLNDPDRLVLRKYDPVAGEHVPFREER.

The protein belongs to the bacterial ribosomal protein bL33 family.

The sequence is that of Large ribosomal subunit protein bL33C (rpmG3) from Streptomyces coelicolor (strain ATCC BAA-471 / A3(2) / M145).